The primary structure comprises 333 residues: tRNA N6-adenosine threonylcarbamoyltransferase (333 aa).

The Fe cation site is built by His111 and His115. Residues 134–138, Asp167, Gly180, and Asn273 each bind substrate; that span reads LASGG. Asp301 serves as a coordination point for Fe cation.

This sequence belongs to the KAE1 / TsaD family. Fe(2+) is required as a cofactor.

The protein localises to the cytoplasm. It catalyses the reaction L-threonylcarbamoyladenylate + adenosine(37) in tRNA = N(6)-L-threonylcarbamoyladenosine(37) in tRNA + AMP + H(+). Its function is as follows. Required for the formation of a threonylcarbamoyl group on adenosine at position 37 (t(6)A37) in tRNAs that read codons beginning with adenine. Is involved in the transfer of the threonylcarbamoyl moiety of threonylcarbamoyl-AMP (TC-AMP) to the N6 group of A37, together with TsaE and TsaB. TsaD likely plays a direct catalytic role in this reaction. This chain is tRNA N6-adenosine threonylcarbamoyltransferase, found in Desulforapulum autotrophicum (strain ATCC 43914 / DSM 3382 / VKM B-1955 / HRM2) (Desulfobacterium autotrophicum).